Reading from the N-terminus, the 185-residue chain is Elongation factor P (185 aa).

The protein belongs to the elongation factor P family.

It localises to the cytoplasm. Its pathway is protein biosynthesis; polypeptide chain elongation. Its function is as follows. Involved in peptide bond synthesis. Stimulates efficient translation and peptide-bond synthesis on native or reconstituted 70S ribosomes in vitro. Probably functions indirectly by altering the affinity of the ribosome for aminoacyl-tRNA, thus increasing their reactivity as acceptors for peptidyl transferase. The sequence is that of Elongation factor P from Dechloromonas aromatica (strain RCB).